Consider the following 189-residue polypeptide: Interferon alpha-1 (189 aa).

The signal sequence occupies residues 1 to 23; the sequence is MARLCAFLMVLAVLSYWPTCSLG. 2 cysteine pairs are disulfide-bonded: C24–C122 and C52–C162. N101 is a glycosylation site (N-linked (GlcNAc...) asparagine).

It belongs to the alpha/beta interferon family. Interacts with CR2. In terms of processing, glycosylated.

The protein localises to the secreted. Functionally, produced by macrophages, IFN-alpha have antiviral activities. Interferon stimulates the production of two enzymes: a protein kinase and an oligoadenylate synthetase. This chain is Interferon alpha-1 (Ifna1), found in Mus musculus (Mouse).